The chain runs to 91 residues: DNA-directed RNA polymerase subunit omega (91 aa).

This sequence belongs to the RNA polymerase subunit omega family. The RNAP catalytic core consists of 2 alpha, 1 beta, 1 beta' and 1 omega subunit. When a sigma factor is associated with the core the holoenzyme is formed, which can initiate transcription.

It catalyses the reaction RNA(n) + a ribonucleoside 5'-triphosphate = RNA(n+1) + diphosphate. Promotes RNA polymerase assembly. Latches the N- and C-terminal regions of the beta' subunit thereby facilitating its interaction with the beta and alpha subunits. This Serratia proteamaculans (strain 568) protein is DNA-directed RNA polymerase subunit omega.